The following is a 411-amino-acid chain: F-box protein At4g19940 (411 aa).

In terms of domain architecture, F-box spans 29-75 (RQPIPEIPFDLVIEILTRLPAKSLMRFKSVSKLWSSLICSRNFTNRL).

The chain is F-box protein At4g19940 from Arabidopsis thaliana (Mouse-ear cress).